Consider the following 1158-residue polypeptide: ATP-dependent helicase/deoxyribonuclease subunit B (1158 aa).

Positions 1–275 (MTLHAYLGRA…QYFNQLYRFN (275 aa)) constitute a UvrD-like helicase ATP-binding domain. 8–15 (GRAGTGKS) lines the ATP pocket. Positions 269 to 583 (NQLYRFNNQD…SIGTMDLAKV (315 aa)) constitute a UvrD-like helicase C-terminal domain. Cys784, Cys1112, Cys1115, and Cys1121 together coordinate [4Fe-4S] cluster.

Belongs to the helicase family. AddB/RexB type 1 subfamily. As to quaternary structure, heterodimer of AddA and AddB. Mg(2+) is required as a cofactor. It depends on [4Fe-4S] cluster as a cofactor.

Its function is as follows. The heterodimer acts as both an ATP-dependent DNA helicase and an ATP-dependent, dual-direction single-stranded exonuclease. Recognizes the chi site generating a DNA molecule suitable for the initiation of homologous recombination. The AddB subunit has 5' -&gt; 3' nuclease activity but not helicase activity. The protein is ATP-dependent helicase/deoxyribonuclease subunit B of Staphylococcus aureus (strain MRSA252).